The chain runs to 457 residues: uncharacterized protein (457 aa).

A TRAM domain is found at 6-64 (PVHKGEVLDVTIMDLTYQGMGVAKVDNYPIFIENALPEEKITVKVTKTTKNFAFGDVEK). Positions 287, 316, 337, and 385 each coordinate S-adenosyl-L-methionine. Residue C412 is the Nucleophile of the active site.

It belongs to the class I-like SAM-binding methyltransferase superfamily. RNA M5U methyltransferase family.

This is an uncharacterized protein from Lactiplantibacillus plantarum (strain ATCC BAA-793 / NCIMB 8826 / WCFS1) (Lactobacillus plantarum).